A 312-amino-acid polypeptide reads, in one-letter code: Envelope glycoprotein K (312 aa).

An N-terminal signal peptide occupies residues 1-20; that stretch reads MLLGGRPLHLLVLGVMGAYA. The Extracellular portion of the chain corresponds to 21-91; the sequence is GLGAYYATVA…VVYARRDCRA (71 aa). N-linked (GlcNAc...) asparagine; by host glycosylation is found at asparagine 58 and asparagine 67. Residues 92 to 112 form a helical membrane-spanning segment; that stretch reads YLWDVHFRLAAVAWLLYAAFV. Residues 113-187 lie on the Cytoplasmic side of the membrane; the sequence is YARQERRMFG…DPITLAHRHP (75 aa). Residues 188–208 form a helical membrane-spanning segment; sequence TLIALILLELGLRLGARMALF. The Extracellular portion of the chain corresponds to 209–227; it reads TTLGVTRAPCALVFPLYAR. A helical transmembrane segment spans residues 228 to 248; that stretch reads ALVWIFVLAVGALELLAATLP. The Cytoplasmic segment spans residues 249–280; it reads HIARVSGATATPARSDGGRAALGVCGACCSTV. Residues 281 to 301 traverse the membrane as a helical segment; the sequence is LAGIFAKALYLCLLVGGVLLF. The Extracellular portion of the chain corresponds to 302 to 312; it reads LHYERHITIFG.

The protein belongs to the alphaherpesvirinae glycoprotein K family. In terms of assembly, interacts (via UL20 interaction region) with protein UL20 homolog (via N-terminus); this interaction probably plays a role in the coordinate transport of protein UL20 homolog and gK to the trans-Golgi network (TGN), and is required for the cell surface expression of gK. N-glycosylated.

Its subcellular location is the host cell membrane. It is found in the host endosome membrane. The protein resides in the host Golgi apparatus membrane. Its function is as follows. Glycoprotein that probably modulates membrane fusion events during secondary envelopment of cytoplasmic capsids that bud into specific trans-Golgi network (TGN)-derived membranes. This chain is Envelope glycoprotein K (gK), found in Sus scrofa (Pig).